The chain runs to 144 residues: 3-dehydroquinate dehydratase (144 aa).

Y22 functions as the Proton acceptor in the catalytic mechanism. Residues N71, H77, and D84 each coordinate substrate. The active-site Proton donor is H97. Residues 98-99 (IS) and R108 each bind substrate.

Belongs to the type-II 3-dehydroquinase family. In terms of assembly, homododecamer.

The enzyme catalyses 3-dehydroquinate = 3-dehydroshikimate + H2O. It functions in the pathway metabolic intermediate biosynthesis; chorismate biosynthesis; chorismate from D-erythrose 4-phosphate and phosphoenolpyruvate: step 3/7. Its function is as follows. Catalyzes a trans-dehydration via an enolate intermediate. The protein is 3-dehydroquinate dehydratase (aroQ) of Thermotoga maritima (strain ATCC 43589 / DSM 3109 / JCM 10099 / NBRC 100826 / MSB8).